Here is a 204-residue protein sequence, read N- to C-terminus: UPF0637 protein SAR1080 (204 aa).

It belongs to the UPF0637 family.

The polypeptide is UPF0637 protein SAR1080 (Staphylococcus aureus (strain MRSA252)).